We begin with the raw amino-acid sequence, 453 residues long: MSWSLHPRNLILYFYALLFLSSTCVAYVATRDNCCILDERFGSYCPTTCGIADFLSTYQTKVDKDLQSLEDILHQVENKTSEVKQLIKAIQLTYNPDESSKPNMIDAATLKSRKMLEEIMKYEASILTHDSSIRYLQEIYNSNNQKIVNLKEKVAQLEAQCQEPCKDTVQIHDITGKDCQDIANKGAKQSGLYFIKPLKANQQFLVYCEIDGSGNGWTVFQKRLDGSVDFKKNWIQYKEGFGHLSPTGTTEFWLGNEKIHLISTQSAIPYALRVELEDWNGRTSTADYAMFKVGPEADKYRLTYAYFAGGDAGDAFDGFDFGDDPSDKFFTSHNGMQFSTWDNDNDKFEGNCAEQDGSGWWMNKCHAGHLNGVYYQGGTYSKASTPNGYDNGIIWATWKTRWYSMKKTTMKIIPFNRLTIGEGQQHHLGGAKQVRPEHPAETEYDSLYPEDDL.

Residues Met1 to Ala26 form the signal peptide. Ser68 is modified (phosphoserine; by FAM20C). Asn78 is a glycosylation site (N-linked (GlcNAc...) (complex) asparagine). A Fibrinogen C-terminal domain is found at Gln170–Asn416. An intrachain disulfide couples Cys179 to Cys208. N-linked (GlcNAc...) asparagine; in variant Asahi glycosylation is present at Asn334. Asp344, Asp346, Phe348, and Gly350 together coordinate Ca(2+). Cys352 and Cys365 are joined by a disulfide. Residues Thr400–Glu422 form a gamma-chain polymerization, binding amino end of another fibrin alpha chain region. The tract at residues Gly423–Glu437 is platelet aggregation and Staphylococcus clumping. Gln424 participates in a covalent cross-link: Isoglutamyl lysine isopeptide (Gln-Lys) (interchain with K-432). The interval Gln424–Leu453 is disordered. Lys432 is covalently cross-linked (Isoglutamyl lysine isopeptide (Lys-Gln) (interchain with Q-424)). The segment covering Thr442–Leu453 has biased composition (acidic residues). Sulfotyrosine occurs at positions 444 and 448.

Heterohexamer; disulfide linked. Contains 2 sets of 3 non-identical chains (alpha, beta and gamma). The 2 heterotrimers are in head to head conformation with the N-termini in a small central domain. Post-translationally, conversion of fibrinogen to fibrin is triggered by thrombin, which cleaves fibrinopeptides A and B from alpha and beta chains, and thus exposes the N-terminal polymerization sites responsible for the formation of the soft clot. The soft clot is converted into the hard clot by factor XIIIA which catalyzes the epsilon-(gamma-glutamyl)lysine cross-linking between gamma chains (stronger) and between alpha chains (weaker) of different monomers. In terms of processing, sulfation of C-terminal tyrosines increases affinity for thrombin. Detected in blood plasma (at protein level).

Its subcellular location is the secreted. Functionally, together with fibrinogen alpha (FGA) and fibrinogen beta (FGB), polymerizes to form an insoluble fibrin matrix. Has a major function in hemostasis as one of the primary components of blood clots. In addition, functions during the early stages of wound repair to stabilize the lesion and guide cell migration during re-epithelialization. Was originally thought to be essential for platelet aggregation, based on in vitro studies using anticoagulated blood. However, subsequent studies have shown that it is not absolutely required for thrombus formation in vivo. Enhances expression of SELP in activated platelets via an ITGB3-dependent pathway. Maternal fibrinogen is essential for successful pregnancy. Fibrin deposition is also associated with infection, where it protects against IFNG-mediated hemorrhage. May also facilitate the antibacterial immune response via both innate and T-cell mediated pathways. This is Fibrinogen gamma chain (FGG) from Homo sapiens (Human).